The chain runs to 123 residues: Large ribosomal subunit protein bL17 (123 aa).

This sequence belongs to the bacterial ribosomal protein bL17 family. As to quaternary structure, part of the 50S ribosomal subunit. Contacts protein L32.

In Borreliella afzelii (strain PKo) (Borrelia afzelii), this protein is Large ribosomal subunit protein bL17.